The chain runs to 384 residues: Probable endopolygalacturonase C (384 aa).

The first 19 residues, 1–19 (MVRQLILISSLLAAVAVRA), serve as a signal peptide directing secretion. Residues 20-40 (APADPAHPMVTEAPDVNLVEK) constitute a propeptide that is removed on maturation. Cysteines 45 and 63 form a disulfide. PbH1 repeat units follow at residues 176–207 (STDL…DIGE) and 208–229 (STYI…AINS). Asp222 acts as the Proton donor in catalysis. A disulfide bridge links Cys224 with Cys240. Residue His244 is part of the active site. 2 PbH1 repeats span residues 254-280 (RDDN…RIKT) and 288-310 (VSEV…VIEQ). Asn261 carries an N-linked (GlcNAc...) asparagine glycan. Cystine bridges form between Cys349–Cys354 and Cys373–Cys382.

Belongs to the glycosyl hydrolase 28 family.

Its subcellular location is the secreted. The enzyme catalyses (1,4-alpha-D-galacturonosyl)n+m + H2O = (1,4-alpha-D-galacturonosyl)n + (1,4-alpha-D-galacturonosyl)m.. Functionally, involved in maceration and soft-rotting of plant tissue. Hydrolyzes the 1,4-alpha glycosidic bonds of de-esterified pectate in the smooth region of the plant cell wall. The protein is Probable endopolygalacturonase C (pgaC) of Aspergillus niger (strain ATCC MYA-4892 / CBS 513.88 / FGSC A1513).